A 175-amino-acid chain; its full sequence is NADH-quinone oxidoreductase subunit B (175 aa).

Residues C54, C55, C119, and C149 each coordinate [4Fe-4S] cluster.

This sequence belongs to the complex I 20 kDa subunit family. In terms of assembly, NDH-1 is composed of at least 14 different subunits, Nqo1 to Nqo14. The complex has a L-shaped structure, with the hydrophobic arm (subunits Nqo7, Nqo8, Nqo10 to Nqo14) embedded in the inner membrane and the hydrophilic peripheral arm (subunits Nqo1 to Nqo6, Nqo9) protruding into the bacterial cytoplasm. The hydrophilic domain contains all the redox centers. NADH-quinone oxidoreductase forms a supercomplex with ubiquinol-cytochrome c reductase complex (complex III or cytochrome b-c1 complex) and cytochrome c oxidase (complex IV), which stabilizes the NADH-quinone oxidoreductase complex. It depends on [4Fe-4S] cluster as a cofactor.

It is found in the cell inner membrane. It carries out the reaction a quinone + NADH + 5 H(+)(in) = a quinol + NAD(+) + 4 H(+)(out). Its function is as follows. NDH-1 shuttles electrons from NADH, via FMN and iron-sulfur (Fe-S) centers, to quinones in the respiratory chain. The immediate electron acceptor for the enzyme in this species is believed to be ubiquinone. Couples the redox reaction to proton translocation (for every two electrons transferred, four hydrogen ions are translocated across the cytoplasmic membrane), and thus conserves the redox energy in a proton gradient. This Paracoccus denitrificans (strain Pd 1222) protein is NADH-quinone oxidoreductase subunit B.